A 204-amino-acid polypeptide reads, in one-letter code: Large ribosomal subunit protein uL4 (204 aa).

Residues 44–76 form a disordered region; sequence KRQGTQSAKTRSEVRGGGIKPWRQKGTGRARQG.

It belongs to the universal ribosomal protein uL4 family. Part of the 50S ribosomal subunit.

One of the primary rRNA binding proteins, this protein initially binds near the 5'-end of the 23S rRNA. It is important during the early stages of 50S assembly. It makes multiple contacts with different domains of the 23S rRNA in the assembled 50S subunit and ribosome. In terms of biological role, forms part of the polypeptide exit tunnel. The polypeptide is Large ribosomal subunit protein uL4 (Clostridium perfringens (strain 13 / Type A)).